The primary structure comprises 166 residues: Large ribosomal subunit protein uL10 (166 aa).

This sequence belongs to the universal ribosomal protein uL10 family. In terms of assembly, part of the ribosomal stalk of the 50S ribosomal subunit. The N-terminus interacts with L11 and the large rRNA to form the base of the stalk. The C-terminus forms an elongated spine to which L12 dimers bind in a sequential fashion forming a multimeric L10(L12)X complex.

Functionally, forms part of the ribosomal stalk, playing a central role in the interaction of the ribosome with GTP-bound translation factors. The polypeptide is Large ribosomal subunit protein uL10 (Aromatoleum aromaticum (strain DSM 19018 / LMG 30748 / EbN1) (Azoarcus sp. (strain EbN1))).